Consider the following 357-residue polypeptide: 3-isopropylmalate dehydrogenase, chloroplastic (357 aa).

The transit peptide at 1-29 (MALQIAKRLLRCRADSVASSVRFFDRTFT) directs the protein to the chloroplast. Residues Arg120, Arg130, Arg151, and Asp238 each coordinate substrate. Positions 238, 262, and 266 each coordinate Mg(2+). 296–308 (GSAPDIAGKNLAN) is an NAD(+) binding site.

This sequence belongs to the isocitrate and isopropylmalate dehydrogenases family. Homodimer. The cofactor is Mg(2+). Mn(2+) is required as a cofactor.

The protein resides in the plastid. Its subcellular location is the chloroplast. The catalysed reaction is (2R,3S)-3-isopropylmalate + NAD(+) = 4-methyl-2-oxopentanoate + CO2 + NADH. The protein operates within amino-acid biosynthesis; L-leucine biosynthesis; L-leucine from 3-methyl-2-oxobutanoate: step 3/4. Catalyzes the oxidation of 3-carboxy-2-hydroxy-4-methylpentanoate (3-isopropylmalate) to 3-carboxy-4-methyl-2-oxopentanoate. The product decarboxylates to 4-methyl-2 oxopentanoate. In Solanum tuberosum (Potato), this protein is 3-isopropylmalate dehydrogenase, chloroplastic.